Consider the following 171-residue polypeptide: S-ribosylhomocysteine lyase (171 aa).

Residues His-54, His-58, and Cys-128 each contribute to the Fe cation site.

Belongs to the LuxS family. Homodimer. The cofactor is Fe cation.

The catalysed reaction is S-(5-deoxy-D-ribos-5-yl)-L-homocysteine = (S)-4,5-dihydroxypentane-2,3-dione + L-homocysteine. Functionally, involved in the synthesis of autoinducer 2 (AI-2) which is secreted by bacteria and is used to communicate both the cell density and the metabolic potential of the environment. The regulation of gene expression in response to changes in cell density is called quorum sensing. Catalyzes the transformation of S-ribosylhomocysteine (RHC) to homocysteine (HC) and 4,5-dihydroxy-2,3-pentadione (DPD). In Escherichia coli (strain 55989 / EAEC), this protein is S-ribosylhomocysteine lyase.